The chain runs to 146 residues: Endoribonuclease YbeY (146 aa).

Positions 108, 112, and 118 each coordinate Zn(2+).

Belongs to the endoribonuclease YbeY family. Requires Zn(2+) as cofactor.

It is found in the cytoplasm. In terms of biological role, single strand-specific metallo-endoribonuclease involved in late-stage 70S ribosome quality control and in maturation of the 3' terminus of the 16S rRNA. This Aster yellows witches'-broom phytoplasma (strain AYWB) protein is Endoribonuclease YbeY.